The sequence spans 329 residues: 4-hydroxythreonine-4-phosphate dehydrogenase (329 aa).

Residues His-136 and Thr-137 each coordinate substrate. A divalent metal cation-binding residues include His-166, His-211, and His-266. Residues Lys-274, Asn-283, and Arg-292 each contribute to the substrate site.

This sequence belongs to the PdxA family. As to quaternary structure, homodimer. Zn(2+) serves as cofactor. Requires Mg(2+) as cofactor. Co(2+) is required as a cofactor.

The protein resides in the cytoplasm. It carries out the reaction 4-(phosphooxy)-L-threonine + NAD(+) = 3-amino-2-oxopropyl phosphate + CO2 + NADH. The protein operates within cofactor biosynthesis; pyridoxine 5'-phosphate biosynthesis; pyridoxine 5'-phosphate from D-erythrose 4-phosphate: step 4/5. Functionally, catalyzes the NAD(P)-dependent oxidation of 4-(phosphooxy)-L-threonine (HTP) into 2-amino-3-oxo-4-(phosphooxy)butyric acid which spontaneously decarboxylates to form 3-amino-2-oxopropyl phosphate (AHAP). The chain is 4-hydroxythreonine-4-phosphate dehydrogenase from Escherichia coli O6:H1 (strain CFT073 / ATCC 700928 / UPEC).